The chain runs to 578 residues: Probable nucleoredoxin 1 (578 aa).

Thioredoxin domains are found at residues 18–172 (SLLS…RARR), 178–321 (SVLV…EKFQ), and 325–485 (ELEK…EIEA).

It belongs to the nucleoredoxin family.

The catalysed reaction is [protein]-dithiol + NAD(+) = [protein]-disulfide + NADH + H(+). The enzyme catalyses [protein]-dithiol + NADP(+) = [protein]-disulfide + NADPH + H(+). Its function is as follows. Probable thiol-disulfide oxidoreductase required for pollen tube growth and pollen function in the pistil. Seems not to be required for in vitro pollen tube growth. May be involved in the generation of lipid signaling molecules in pistil. This Arabidopsis thaliana (Mouse-ear cress) protein is Probable nucleoredoxin 1.